The primary structure comprises 36 residues: Phospholipase A2 hemilipin-2 (36 aa).

The protein belongs to the phospholipase A2 family. Group III subfamily. In terms of assembly, heterodimer composed of a small subunit and a large subunit; disulfid-linked. It depends on Ca(2+) as a cofactor. Expressed by the venom gland.

It localises to the secreted. The catalysed reaction is a 1,2-diacyl-sn-glycero-3-phosphocholine + H2O = a 1-acyl-sn-glycero-3-phosphocholine + a fatty acid + H(+). Scorpion venom phospholipase A2 (PLA2) that impacts angiogenesis in vitro and in vivo without showing any cytotoxic or apoptotic signs. The antiangiogenic effect is independent from the catalytic activity and seems to be held by its small subunit. PLA2 catalyzes the calcium-dependent hydrolysis of the 2-acyl groups in 3-sn-phosphoglycerides. The sequence is that of Phospholipase A2 hemilipin-2 from Hemiscorpius lepturus (Scorpion).